Consider the following 650-residue polypeptide: Fructose-1,6-bisphosphatase class 3 (650 aa).

The protein belongs to the FBPase class 3 family. Mn(2+) is required as a cofactor.

The catalysed reaction is beta-D-fructose 1,6-bisphosphate + H2O = beta-D-fructose 6-phosphate + phosphate. The protein operates within carbohydrate biosynthesis; gluconeogenesis. In Staphylococcus xylosus, this protein is Fructose-1,6-bisphosphatase class 3.